The following is a 137-amino-acid chain: Large ribosomal subunit protein uL16 (137 aa).

It belongs to the universal ribosomal protein uL16 family. As to quaternary structure, part of the 50S ribosomal subunit.

Its function is as follows. Binds 23S rRNA and is also seen to make contacts with the A and possibly P site tRNAs. The chain is Large ribosomal subunit protein uL16 from Rhizobium meliloti (strain 1021) (Ensifer meliloti).